A 130-amino-acid chain; its full sequence is Neelaredoxin (130 aa).

Residues glutamate 15, histidine 17, histidine 45, histidine 51, cysteine 115, and histidine 118 each coordinate Fe cation.

The protein belongs to the desulfoferrodoxin family. In terms of assembly, monomer. Fe cation is required as a cofactor.

The enzyme catalyses 2 superoxide + 2 H(+) = H2O2 + O2. In terms of biological role, non-heme iron protein. This chain is Neelaredoxin (nlr), found in Megalodesulfovibrio gigas (Desulfovibrio gigas).